We begin with the raw amino-acid sequence, 364 residues long: Solute carrier family 35 member C2 (364 aa).

Helical transmembrane passes span 14-34 and 42-62; these read AALTLGLVLLYYCFSIGITFY and FHFPLFMTMLHLAVIFLFSAL. N-linked (GlcNAc...) asparagine glycosylation is present at Asn-102. A run of 7 helical transmembrane segments spans residues 104 to 124, 136 to 156, 166 to 186, 202 to 222, 238 to 258, 272 to 292, and 295 to 315; these read SFLYITVSLYTMTKSSAVLFI, LRAALVLVVLLIAGGLFMFTY, FALVLGASFIGGIRWTLTQIL, FHLQPLMFLGLFPLFAIFEGL, LLLWVLGSLLLGGILAFGLGF, LSIAGIFKEVCTLLLAAHLLG, and ISLLNWLGFALCLSGISLHVA. Ser-335 and Ser-336 each carry phosphoserine.

Belongs to the TPT transporter family. SLC35C subfamily.

It localises to the golgi apparatus. The protein resides in the cis-Golgi network membrane. It is found in the endoplasmic reticulum-Golgi intermediate compartment membrane. In terms of biological role, may play an important role in the cellular response to tissue hypoxia. May be either a GDP-fucose transporter that competes with SLC35C1 for GDP-fucose, or a factor that otherwise enhances the fucosylation of Notch and is required for optimal Notch signaling in mammalian cells. The polypeptide is Solute carrier family 35 member C2 (Slc35c2) (Mus musculus (Mouse)).